A 99-amino-acid polypeptide reads, in one-letter code: Small ribosomal subunit protein bS20 (99 aa).

Belongs to the bacterial ribosomal protein bS20 family.

In terms of biological role, binds directly to 16S ribosomal RNA. The polypeptide is Small ribosomal subunit protein bS20 (Thermomicrobium roseum (strain ATCC 27502 / DSM 5159 / P-2)).